The following is a 435-amino-acid chain: 3-phosphoshikimate 1-carboxyvinyltransferase (435 aa).

Positions 15, 16, and 20 each coordinate 3-phosphoshikimate. Residue K15 coordinates phosphoenolpyruvate. Residues G96 and R124 each contribute to the phosphoenolpyruvate site. 3-phosphoshikimate-binding residues include S169, Q171, S195, D319, and K346. Position 171 (Q171) interacts with phosphoenolpyruvate. D319 acts as the Proton acceptor in catalysis. Residues R350 and R395 each coordinate phosphoenolpyruvate.

Belongs to the EPSP synthase family. As to quaternary structure, monomer.

The protein localises to the cytoplasm. It carries out the reaction 3-phosphoshikimate + phosphoenolpyruvate = 5-O-(1-carboxyvinyl)-3-phosphoshikimate + phosphate. It functions in the pathway metabolic intermediate biosynthesis; chorismate biosynthesis; chorismate from D-erythrose 4-phosphate and phosphoenolpyruvate: step 6/7. Functionally, catalyzes the transfer of the enolpyruvyl moiety of phosphoenolpyruvate (PEP) to the 5-hydroxyl of shikimate-3-phosphate (S3P) to produce enolpyruvyl shikimate-3-phosphate and inorganic phosphate. This is 3-phosphoshikimate 1-carboxyvinyltransferase from Chlorobium phaeobacteroides (strain BS1).